An 824-amino-acid polypeptide reads, in one-letter code: Leucine--tRNA ligase (824 aa).

Positions P42 to H52 match the 'HIGH' region motif. The 'KMSKS' region motif lies at K581–S585. K584 serves as a coordination point for ATP.

Belongs to the class-I aminoacyl-tRNA synthetase family.

The protein resides in the cytoplasm. The catalysed reaction is tRNA(Leu) + L-leucine + ATP = L-leucyl-tRNA(Leu) + AMP + diphosphate. This is Leucine--tRNA ligase from Geobacter metallireducens (strain ATCC 53774 / DSM 7210 / GS-15).